Here is a 304-residue protein sequence, read N- to C-terminus: MSKKLTFQEIILTLQQFWNDQGCMLMQAYDNEKGAGTMSPYTFLRAIGPEPWNAAYVEPSRRPADGRYGENPNRLYQHHQFQVVMKPSPSNVQELYLKSLELLGINPLEHDIRFVEDNWENPSTGSAGLGWEVWLDGMEITQFTYFQQVGGLQTGPVTSEVTYGLERLASYIQEVDSVYDIEWAPGVKYGEIFTQPEYEHSKYSFEISDQVMLLENFEKFEREAKRALEEGLVHPAYDYVLKCSHTFNLLDARGAVSVTERAGYITRIRNLARVVAKTFVAERKKLGFPLLDEETRIKLLAEED.

This sequence belongs to the class-II aminoacyl-tRNA synthetase family. Tetramer of two alpha and two beta subunits.

It is found in the cytoplasm. The catalysed reaction is tRNA(Gly) + glycine + ATP = glycyl-tRNA(Gly) + AMP + diphosphate. This is Glycine--tRNA ligase alpha subunit from Streptococcus agalactiae serotype III (strain NEM316).